The sequence spans 152 residues: Transmembrane protein 35B (152 aa).

Positions 1–21 are cleaved as a signal peptide; the sequence is MLVSLGALRVLLGIFFTLTGA. 3 helical membrane-spanning segments follow: residues 62-82, 85-105, and 111-131; these read AAVGWLELLAGLLLVVGPPVL, ISNVLLILLMMGAVFTLVVLE, and YIPAVVCLGLLLLLDSCQFLV.

Belongs to the DoxX family.

It localises to the membrane. The chain is Transmembrane protein 35B from Rattus norvegicus (Rat).